The chain runs to 157 residues: Cyclic pyranopterin monophosphate synthase (157 aa).

Residues 74 to 76 (MCH) and 112 to 113 (ME) each bind substrate. D127 is a catalytic residue.

Belongs to the MoaC family. Homohexamer; trimer of dimers.

The enzyme catalyses (8S)-3',8-cyclo-7,8-dihydroguanosine 5'-triphosphate = cyclic pyranopterin phosphate + diphosphate. It participates in cofactor biosynthesis; molybdopterin biosynthesis. Functionally, catalyzes the conversion of (8S)-3',8-cyclo-7,8-dihydroguanosine 5'-triphosphate to cyclic pyranopterin monophosphate (cPMP). In Campylobacter lari (strain RM2100 / D67 / ATCC BAA-1060), this protein is Cyclic pyranopterin monophosphate synthase.